The sequence spans 118 residues: Small ribosomal subunit protein uS13 (118 aa).

The disordered stretch occupies residues 93 to 118 (RGLPVRGQRTKTNARTRKGPRKPIRK).

It belongs to the universal ribosomal protein uS13 family. As to quaternary structure, part of the 30S ribosomal subunit. Forms a loose heterodimer with protein S19. Forms two bridges to the 50S subunit in the 70S ribosome.

Functionally, located at the top of the head of the 30S subunit, it contacts several helices of the 16S rRNA. In the 70S ribosome it contacts the 23S rRNA (bridge B1a) and protein L5 of the 50S subunit (bridge B1b), connecting the 2 subunits; these bridges are implicated in subunit movement. Contacts the tRNAs in the A and P-sites. The chain is Small ribosomal subunit protein uS13 from Pseudomonas fluorescens (strain ATCC BAA-477 / NRRL B-23932 / Pf-5).